The following is a 227-amino-acid chain: ATP-dependent dethiobiotin synthetase BioD (227 aa).

13–18 is a binding site for ATP; it reads DIGKTY. A Mg(2+)-binding site is contributed by Thr-17. Residue Lys-38 is part of the active site. Ser-42 provides a ligand contact to substrate. ATP-binding positions include Asp-55, 116–119, and 179–180; these read EGSG and NN. Positions 55 and 116 each coordinate Mg(2+).

Belongs to the dethiobiotin synthetase family. As to quaternary structure, homodimer. Mg(2+) is required as a cofactor.

The protein resides in the cytoplasm. The catalysed reaction is (7R,8S)-7,8-diammoniononanoate + CO2 + ATP = (4R,5S)-dethiobiotin + ADP + phosphate + 3 H(+). Its pathway is cofactor biosynthesis; biotin biosynthesis; biotin from 7,8-diaminononanoate: step 1/2. Its function is as follows. Catalyzes a mechanistically unusual reaction, the ATP-dependent insertion of CO2 between the N7 and N8 nitrogen atoms of 7,8-diaminopelargonic acid (DAPA, also called 7,8-diammoniononanoate) to form a ureido ring. In Clostridium botulinum (strain ATCC 19397 / Type A), this protein is ATP-dependent dethiobiotin synthetase BioD.